Here is a 744-residue protein sequence, read N- to C-terminus: MFNEIIKTVEWGGKTLELSTGKIARQADGAVTVKMGNSVLLCTAVTAAKAKEGIGFFPLTINYREMAYAAGKIPGGFFKREGKASDREVLVSRLIDRPIRPLFHPAFVNETFVTCTVLSYDPETPVDILAIIGASAALSLSPAPYLEIVAASKVGLINGEFFLHPTLDLLKTSQLDLVVAGTNDSVMMVESEAHLLSEEQMLAAVKFGFDSFQPVVNIIKELAAEAKKSKLEMQDLYPAELKNEIKKLFAKEIEQTFAIKSKQERSTNLELIPEKVLKHFADDIESKKYNNYQIESALKSVESDILRGNILQKNKRIDGRTTTDIRQITCEVGLLPCAHGSALFTRGETQSLVSSTFGTSLDEQIIDSLEGEYKERFMLNYIFPPYSVNEAMPMKAPGRREVGHGKLAWRAVNPVLPTKTQFPYSIRVVAETTESNGSSSMATVCGSSLALMYAGVPIKAPVAGIAMGLVKEDEKFAVLSDILGDEDYFGDMDFKVAGTSEGITALQMDIKIRGVNFEIMKIALEQARLGRLHILEQMNKVISKPNNEMSKNAPSTTTLKVDKDKIRDIIGPGGKVIKEICETSGAKIDISDDGTVSIYASDKDKLKVALDKVKAIAIEPEIGEVFNGTVMKILDSGAFVNYLGNKDGFVHISEIAEERIESVGSVLKQGDIVKVKLIGFDNKGKAKLTIKNAEKDKSSANPKPKNSPKEHQEPEKRDNGKKRAWNEDNNAETTEVVTERKYFS.

Positions 487 and 493 each coordinate Mg(2+). The 60-residue stretch at 554-613 (PSTTTLKVDKDKIRDIIGPGGKVIKEICETSGAKIDISDDGTVSIYASDKDKLKVALDKV) folds into the KH domain. The 69-residue stretch at 623–691 (GEVFNGTVMK…NKGKAKLTIK (69 aa)) folds into the S1 motif domain. The interval 691-744 (KNAEKDKSSANPKPKNSPKEHQEPEKRDNGKKRAWNEDNNAETTEVVTERKYFS) is disordered. Over residues 707 to 718 (SPKEHQEPEKRD) the composition is skewed to basic and acidic residues. The segment covering 727-736 (EDNNAETTEV) has biased composition (polar residues).

Belongs to the polyribonucleotide nucleotidyltransferase family. Requires Mg(2+) as cofactor.

The protein resides in the cytoplasm. The enzyme catalyses RNA(n+1) + phosphate = RNA(n) + a ribonucleoside 5'-diphosphate. Its function is as follows. Involved in mRNA degradation. Catalyzes the phosphorolysis of single-stranded polyribonucleotides processively in the 3'- to 5'-direction. The chain is Polyribonucleotide nucleotidyltransferase from Rickettsia bellii (strain OSU 85-389).